Consider the following 297-residue polypeptide: Tyrosine recombinase XerD (297 aa).

Residues 1–87 (MLEYAIEDFF…SIRSFHQFLI (87 aa)) form the Core-binding (CB) domain. A Tyr recombinase domain is found at 108 to 291 (KLPDILSQDE…TKARLKDMYQ (184 aa)). Catalysis depends on residues Arg147, Lys171, His243, Arg246, and His269. Catalysis depends on Tyr278, which acts as the O-(3'-phospho-DNA)-tyrosine intermediate.

This sequence belongs to the 'phage' integrase family. XerD subfamily. In terms of assembly, forms a cyclic heterotetrameric complex composed of two molecules of XerC and two molecules of XerD.

The protein resides in the cytoplasm. Functionally, site-specific tyrosine recombinase, which acts by catalyzing the cutting and rejoining of the recombining DNA molecules. The XerC-XerD complex is essential to convert dimers of the bacterial chromosome into monomers to permit their segregation at cell division. It also contributes to the segregational stability of plasmids. This chain is Tyrosine recombinase XerD, found in Oceanobacillus iheyensis (strain DSM 14371 / CIP 107618 / JCM 11309 / KCTC 3954 / HTE831).